The following is a 715-amino-acid chain: Fatty acid oxidation complex subunit alpha (715 aa).

The segment at 8–197 (NSQPSAFSLT…NLGLVEEAVP (190 aa)) is enoyl-CoA hydratase. The 3-hydroxyacyl-CoA dehydrogenase stretch occupies residues 313 to 715 (ATIKKVGVLG…MANEEQSFYS (403 aa)).

It in the N-terminal section; belongs to the enoyl-CoA hydratase/isomerase family. In the central section; belongs to the 3-hydroxyacyl-CoA dehydrogenase family. As to quaternary structure, heterotetramer of two alpha chains (FadJ) and two beta chains (FadI).

The protein localises to the cytoplasm. The enzyme catalyses a (3S)-3-hydroxyacyl-CoA = a (2E)-enoyl-CoA + H2O. It catalyses the reaction a 4-saturated-(3S)-3-hydroxyacyl-CoA = a (3E)-enoyl-CoA + H2O. It carries out the reaction a (3S)-3-hydroxyacyl-CoA + NAD(+) = a 3-oxoacyl-CoA + NADH + H(+). The catalysed reaction is (3S)-3-hydroxybutanoyl-CoA = (3R)-3-hydroxybutanoyl-CoA. It participates in lipid metabolism; fatty acid beta-oxidation. Functionally, catalyzes the formation of a hydroxyacyl-CoA by addition of water on enoyl-CoA. Also exhibits 3-hydroxyacyl-CoA epimerase and 3-hydroxyacyl-CoA dehydrogenase activities. The polypeptide is Fatty acid oxidation complex subunit alpha (Photobacterium profundum (strain SS9)).